The primary structure comprises 569 residues: Urease subunit alpha (569 aa).

The Ni(2+) site is built by His-136, His-138, and Lys-219. Lys-219 carries the N6-carboxylysine modification. His-221 is a binding site for substrate. Positions 248 and 274 each coordinate Ni(2+). His-322 serves as the catalytic Proton donor. Asp-362 provides a ligand contact to Ni(2+).

Belongs to the metallo-dependent hydrolases superfamily. Urease alpha subunit family. As to quaternary structure, heterotrimer of UreA (gamma), UreB (beta) and UreC (alpha) subunits. Three heterotrimers associate to form the active enzyme. The cofactor is Ni cation. Carboxylation allows a single lysine to coordinate two nickel ions.

Its subcellular location is the cytoplasm. The catalysed reaction is urea + 2 H2O + H(+) = hydrogencarbonate + 2 NH4(+). Its pathway is nitrogen metabolism; urea degradation; CO(2) and NH(3) from urea (urease route): step 1/1. The protein is Urease subunit alpha of Microcystis aeruginosa (strain NIES-843 / IAM M-2473).